A 188-amino-acid polypeptide reads, in one-letter code: Large ribosomal subunit protein eL18 (188 aa).

Positions 153-188 (GKAPGTPHSHTKPYVRSKGRKFERARGRRASCGYKN) are disordered. Positions 161 to 171 (SHTKPYVRSKG) are enriched in basic residues.

It belongs to the eukaryotic ribosomal protein eL18 family. Component of the large ribosomal subunit.

Its subcellular location is the cytoplasm. The protein resides in the cytosol. The protein localises to the rough endoplasmic reticulum. Component of the large ribosomal subunit. The ribosome is a large ribonucleoprotein complex responsible for the synthesis of proteins in the cell. This Oreochromis mossambicus (Mozambique tilapia) protein is Large ribosomal subunit protein eL18 (rpl18).